The primary structure comprises 540 residues: Phosphoenolpyruvate carboxykinase (ATP) (540 aa).

Residues arginine 67, tyrosine 207, and lysine 213 each contribute to the substrate site. Residues lysine 213, histidine 232, and 248–256 (GLSGTGKTT) each bind ATP. Mn(2+)-binding residues include lysine 213 and histidine 232. Aspartate 269 is a binding site for Mn(2+). ATP is bound by residues glutamate 297, arginine 333, 449–450 (RI), and threonine 455. Arginine 333 contributes to the substrate binding site.

Belongs to the phosphoenolpyruvate carboxykinase (ATP) family. As to quaternary structure, monomer. Requires Mn(2+) as cofactor.

The protein resides in the cytoplasm. The enzyme catalyses oxaloacetate + ATP = phosphoenolpyruvate + ADP + CO2. Its pathway is carbohydrate biosynthesis; gluconeogenesis. In terms of biological role, involved in the gluconeogenesis. Catalyzes the conversion of oxaloacetate (OAA) to phosphoenolpyruvate (PEP) through direct phosphoryl transfer between the nucleoside triphosphate and OAA. In Aliivibrio fischeri (strain MJ11) (Vibrio fischeri), this protein is Phosphoenolpyruvate carboxykinase (ATP).